The following is a 136-amino-acid chain: Probable disulfide formation protein (136 aa).

Residues 7-26 (NNALYFAWLICSTGTVMSIY) traverse the membrane as a helical segment. Cysteines 36 and 39 form a disulfide. 2 consecutive transmembrane segments (helical) span residues 41-60 (YQRI…TYRE) and 67-84 (YALP…YQIC). Cysteine 96 and cysteine 101 are joined by a disulfide. Residues 109 to 133 (GFITVPMASALAFCAISCLLILSGS) form a helical membrane-spanning segment.

It belongs to the DsbB family. BdbC subfamily.

It localises to the cell inner membrane. Its function is as follows. Required for disulfide bond formation in some proteins. This chain is Probable disulfide formation protein, found in Chlamydia caviae (strain ATCC VR-813 / DSM 19441 / 03DC25 / GPIC) (Chlamydophila caviae).